The primary structure comprises 137 residues: Lysozyme (137 aa).

The signal sequence occupies residues Met1 to Ala20. The region spanning Thr21 to Val135 is the I-type lysozyme domain. Disulfide bonds link Cys26-Cys102, Cys31-Cys37, Cys42-Cys51, Cys64-Cys84, Cys74-Cys80, and Cys98-Cys116. Glu34 serves as the catalytic Proton donor. Catalysis depends on Asp45, which acts as the Nucleophile. Position 57–63 (Lys57–Asp63) interacts with substrate. Substrate contacts are provided by residues Tyr88 and His109–Gly111.

This sequence belongs to the glycosyl hydrolase 22 family. Type-I lysozyme subfamily. In terms of tissue distribution, expressed in the basophil cells of the oyster digestive gland.

The protein localises to the secreted. It catalyses the reaction Hydrolysis of (1-&gt;4)-beta-linkages between N-acetylmuramic acid and N-acetyl-D-glucosamine residues in a peptidoglycan and between N-acetyl-D-glucosamine residues in chitodextrins.. Its function is as follows. Has bacteriolytic activity. May play a role in digestion and in the host defense mechanisms against invading microbes. This is Lysozyme (lysoz) from Magallana gigas (Pacific oyster).